A 248-amino-acid polypeptide reads, in one-letter code: Proteasome subunit alpha type-3 (248 aa).

It belongs to the peptidase T1A family. As to quaternary structure, the 26S proteasome consists of a 20S proteasome core and two 19S regulatory subunits. The 20S proteasome core is composed of 28 subunits that are arranged in four stacked rings, resulting in a barrel-shaped structure. The two end rings are each formed by seven alpha subunits, and the two central rings are each formed by seven beta subunits. The catalytic chamber with the active sites is on the inside of the barrel.

It is found in the cytoplasm. Its subcellular location is the nucleus. Its function is as follows. The proteasome is a multicatalytic proteinase complex which is characterized by its ability to cleave peptides with Arg, Phe, Tyr, Leu, and Glu adjacent to the leaving group at neutral or slightly basic pH. The proteasome has an ATP-dependent proteolytic activity. In Dictyostelium discoideum (Social amoeba), this protein is Proteasome subunit alpha type-3 (psmA3).